A 98-amino-acid chain; its full sequence is Large ribosomal subunit protein bL21 (98 aa).

The protein belongs to the bacterial ribosomal protein bL21 family. Part of the 50S ribosomal subunit. Contacts protein L20.

Its function is as follows. This protein binds to 23S rRNA in the presence of protein L20. This Novosphingobium aromaticivorans (strain ATCC 700278 / DSM 12444 / CCUG 56034 / CIP 105152 / NBRC 16084 / F199) protein is Large ribosomal subunit protein bL21.